The chain runs to 426 residues: Spermidine/putrescine import ATP-binding protein PotA (426 aa).

Positions 6–238 (IEFKNVSKTY…PINHFVADFI (233 aa)) constitute an ABC transporter domain. 40-47 (GASGSGKS) is a binding site for ATP.

It belongs to the ABC transporter superfamily. Spermidine/putrescine importer (TC 3.A.1.11.1) family. As to quaternary structure, the complex is composed of two ATP-binding proteins (PotA), two transmembrane proteins (PotB and PotC) and a solute-binding protein (PotD).

Its subcellular location is the cell membrane. The enzyme catalyses ATP + H2O + polyamine-[polyamine-binding protein]Side 1 = ADP + phosphate + polyamineSide 2 + [polyamine-binding protein]Side 1.. Functionally, part of the ABC transporter complex PotABCD involved in spermidine/putrescine import. Responsible for energy coupling to the transport system. In Lactococcus lactis subsp. cremoris (strain SK11), this protein is Spermidine/putrescine import ATP-binding protein PotA.